Reading from the N-terminus, the 3004-residue chain is Guanylate cyclase beta (3004 aa).

At 1 to 66 (MKETDKIKSE…FSLYNFIRRL (66 aa)) the chain is on the cytoplasmic side. Residues 67–87 (ISLDAVIVYTLFMTVYIFSEI) traverse the membrane as a helical segment. The Extracellular segment spans residues 88–94 (SQGITKK). The helical transmembrane segment at 95–115 (YLFVDTAISLFLNIGILVVIE) threads the bilayer. The Cytoplasmic segment spans residues 116-300 (SLFELKLLKD…TFCIKMNNVV (185 aa)). A helical transmembrane segment spans residues 301-321 (YYLIFMYILFVLLSIIIKAIF). Topologically, residues 322 to 334 (YRKGKLLENSNDT) are extracellular. Asn332 is a glycosylation site (N-linked (GlcNAc...) asparagine). A helical membrane pass occupies residues 335-355 (FFTVLEDFIGLYILVLPVMLY). Over 356–991 (SEKSLIYIIQ…GRLNRFSLCR (636 aa)) the chain is Cytoplasmic. Residues 992 to 1012 (AFLWIIYLKVMIGSFYFFHNF) form a helical membrane-spanning segment. Residues 1013 to 1022 (DNFFSGSSIS) lie on the Extracellular side of the membrane. A helical membrane pass occupies residues 1023–1043 (SILYSQTAFAIFHYSLIVAFA). Residues 1044-1072 (SYEIDIPYKFIRNFPYIYQLARRKYFLNN) lie on the Cytoplasmic side of the membrane. The helical transmembrane segment at 1073–1093 (TIIFLNIVESIFSSFISYYIL) threads the bilayer. At 1094–1105 (RGNLFNLITHRK) the chain is on the extracellular side. Residues 1106 to 1126 (FTFHIFVLNFFLISEKILLFS) form a helical membrane-spanning segment. The Cytoplasmic portion of the chain corresponds to 1127–1130 (KTWH). A helical transmembrane segment spans residues 1131–1151 (IFFFIMTIIIVSILFIYINIY). The Extracellular segment spans residues 1152–1171 (TLVDCLITGKCEFSLFDPED). The chain crosses the membrane as a helical span at residues 1172-1192 (SYFWISLLPILYINFIIDKFM). At 1193–1297 (KFVKNKIYPD…YEKRNKLKLR (105 aa)) the chain is on the cytoplasmic side. A helical membrane pass occupies residues 1298-1318 (IIILLLFIIFLITFTIQIIIS). The Extracellular portion of the chain corresponds to 1319 to 1327 (KFIEKKLHS). Residues 1328 to 1348 (LSYLTVIYYIVAVLYLIKILI) traverse the membrane as a helical segment. Topologically, residues 1349-1353 (RNKTN) are cytoplasmic. A helical membrane pass occupies residues 1354–1374 (YTYFYIIGKLLLVIGYLLEIS). Topologically, residues 1375 to 1394 (ENSVNNIINMLVTYSFTVCY) are extracellular. The chain crosses the membrane as a helical span at residues 1395-1415 (IFFISFKILEGLVMCIIILSI). Residues 1416–1457 (AIWVYYHKNNNLNAMCTDFCDNPYTSLDNLEYINISCICKQQ) lie on the Cytoplasmic side of the membrane. The helical transmembrane segment at 1458–1478 (IFTFLICTLSFTLICLFMKYY) threads the bilayer. Topologically, residues 1479 to 1500 (EIYYLKKKFLTRYKQKVNLGKQ) are extracellular. The chain crosses the membrane as a helical span at residues 1501–1521 (IEILHTMLPSFLVEYLLVSDP). The Cytoplasmic portion of the chain corresponds to 1522–2563 (KADGIMVGKN…EIINIDLTKK (1042 aa)). The region spanning 1541-1696 (SVIFCDIDDF…DTVNTASRMK (156 aa)) is the Guanylate cyclase 1 domain. The segment covering 2463-2476 (TMSNSKSGQTNITT) has biased composition (polar residues). The tract at residues 2463–2491 (TMSNSKSGQTNITTDNKKSQIKKNGDVNK) is disordered. Positions 2477-2488 (DNKKSQIKKNGD) are enriched in basic and acidic residues. Residues 2564-2584 (LIIIFVISELILSLCNVIELS) form a helical membrane-spanning segment. The Extracellular segment spans residues 2585–2594 (YYENKETPND). Residues 2595 to 2615 (FIVIIWLIRSIYLFTITFIWL) traverse the membrane as a helical segment. The Cytoplasmic portion of the chain corresponds to 2616–2634 (LLKTKLKEYKDNSSKMMWT). A helical transmembrane segment spans residues 2635 to 2655 (TFILNIFLSSWGIIMIDLACI). Over 2656–2667 (HYSNLVGNSRER) the chain is Extracellular. A helical membrane pass occupies residues 2668–2688 (SIFFMKDATELIISMQLIFVK). The Cytoplasmic portion of the chain corresponds to 2689-2695 (NMLFKHK). Residues 2696–2716 (FFFFVFFFVFLMYSFFKLFVI) traverse the membrane as a helical segment. The Extracellular segment spans residues 2717-2722 (HVCELR). A helical transmembrane segment spans residues 2723 to 2743 (ICCSILLILSINILYFWYSEY). Residues 2744-3004 (LDRTQYIIKR…KLREQNKVKG (261 aa)) lie on the Cytoplasmic side of the membrane. Residues 2793 to 2927 (AFLFADIVGF…LDVLIANHIE (135 aa)) form the Guanylate cyclase 2 domain. Residues Asp2798, Ile2799, and Asp2842 each contribute to the Mg(2+) site.

The protein in the N-terminal section; belongs to the cation transport ATPase (P-type) (TC 3.A.3) family. Type IV subfamily. In the C-terminal section; belongs to the adenylyl cyclase class-4/guanylyl cyclase family. It depends on Mg(2+) as a cofactor. Mn(2+) serves as cofactor.

The protein resides in the membrane. The catalysed reaction is GTP = 3',5'-cyclic GMP + diphosphate. Functionally, catalyzes the synthesis of the second messenger cGMP from GTP. Probably by regulating cGMP production, required for ookinete gliding motility, which is necessary for the ookinete to traverse the midgut epithelium of the mosquito. This is Guanylate cyclase beta from Plasmodium berghei (strain Anka).